The following is a 235-amino-acid chain: Large ribosomal subunit protein uL2 (235 aa).

Positions 197–218 are disordered; the sequence is VAMNPVDHPHGGGEGKTSGGRH.

The protein belongs to the universal ribosomal protein uL2 family. In terms of assembly, part of the 50S ribosomal subunit. Forms a bridge to the 30S subunit in the 70S ribosome.

In terms of biological role, one of the primary rRNA binding proteins. Required for association of the 30S and 50S subunits to form the 70S ribosome, for tRNA binding and peptide bond formation. It has been suggested to have peptidyltransferase activity; this is somewhat controversial. Makes several contacts with the 16S rRNA in the 70S ribosome. The protein is Large ribosomal subunit protein uL2 (rplB) of Carsonella ruddii (strain PV).